The primary structure comprises 190 residues: Xanthine phosphoribosyltransferase (190 aa).

2 residues coordinate xanthine: Leu-20 and Asn-27. 128 to 132 (ANGKA) serves as a coordination point for 5-phospho-alpha-D-ribose 1-diphosphate. A xanthine-binding site is contributed by Lys-156.

The protein belongs to the purine/pyrimidine phosphoribosyltransferase family. Xpt subfamily. As to quaternary structure, homodimer.

It is found in the cytoplasm. It catalyses the reaction XMP + diphosphate = xanthine + 5-phospho-alpha-D-ribose 1-diphosphate. Its pathway is purine metabolism; XMP biosynthesis via salvage pathway; XMP from xanthine: step 1/1. In terms of biological role, converts the preformed base xanthine, a product of nucleic acid breakdown, to xanthosine 5'-monophosphate (XMP), so it can be reused for RNA or DNA synthesis. The protein is Xanthine phosphoribosyltransferase of Finegoldia magna (strain ATCC 29328 / DSM 20472 / WAL 2508) (Peptostreptococcus magnus).